Consider the following 249-residue polypeptide: Elsinochromes biosynthesis cluster protein HP3 (249 aa).

N106 is a glycosylation site (N-linked (GlcNAc...) asparagine). A helical membrane pass occupies residues 138–158 (VVFAFMLSAWLVWLITVYAFA).

The protein resides in the membrane. In terms of biological role, part of the gene cluster that mediates the biosynthesis of elsinochromes, pigments consisting of at least four interconvertible tautomers (A, B, C and D) that have a core phenolic quinone to which various side chains are attached and which play an important role in fungal pathogenesis. The non-reducing polyketide synthase PKS1 was proposed to iteratively catalyze decarboxylation between acetyl-CoA and malonyl-CoA subunits for polyketide chain elongation. The released polyketide undergoes cyclization to form an aromatic ring, and proceeds via serial modification steps to produce the heptaketide back- bone of elsinochrome. As elsinochrome has a symmetrical structure, two identical heptaketides are fused to form a core 1,2-dihydrobenzo-perylene ring structure, which can then be successively modified to produce the various derivatives of elsinochrome. Some of these reactions may be cooperatively carried out, at least in part, by the products of RDT1, OXR1 and PKS1. PRF1, embedded within the elsinochrome cluster possibly functions to stabilize some of the biosynthetic enzymes required for elsinochrome production. As prefoldin is a hexamer containing 2 a and 4 b subunits, additional prefoldin subunits, whose coding genes may not immediately link to the elsinochrome biosynthetic gene cluster, are required to fulfill the chaperone function. In addition, no methyltransferase-coding gene exists within the biosynthetic gene cluster, even though elsinochrome has four methyl groups at positions C3, C7, C8 and C12. Apparently, the identified gene cluster does not contain the entire entourage of genes responsible for elsinochrome biosynthesis. Once elsinochrome is synthesized, it must be exported outside the fungal cells, which is probably accomplished by the ECT1 transporter, to avoid toxicity. The chain is Elsinochromes biosynthesis cluster protein HP3 from Elsinoe fawcettii (Citrus scab fungus).